Consider the following 432-residue polypeptide: Serine hydroxymethyltransferase (432 aa).

(6S)-5,6,7,8-tetrahydrofolate-binding positions include Leu117 and 121-123 (GHL). Lys226 carries the post-translational modification N6-(pyridoxal phosphate)lysine. 366 to 368 (SPF) contributes to the (6S)-5,6,7,8-tetrahydrofolate binding site.

The protein belongs to the SHMT family. As to quaternary structure, homodimer. The cofactor is pyridoxal 5'-phosphate.

The protein resides in the cytoplasm. The catalysed reaction is (6R)-5,10-methylene-5,6,7,8-tetrahydrofolate + glycine + H2O = (6S)-5,6,7,8-tetrahydrofolate + L-serine. The protein operates within one-carbon metabolism; tetrahydrofolate interconversion. It participates in amino-acid biosynthesis; glycine biosynthesis; glycine from L-serine: step 1/1. Functionally, catalyzes the reversible interconversion of serine and glycine with tetrahydrofolate (THF) serving as the one-carbon carrier. This reaction serves as the major source of one-carbon groups required for the biosynthesis of purines, thymidylate, methionine, and other important biomolecules. Also exhibits THF-independent aldolase activity toward beta-hydroxyamino acids, producing glycine and aldehydes, via a retro-aldol mechanism. In Salinibacter ruber (strain DSM 13855 / M31), this protein is Serine hydroxymethyltransferase.